A 678-amino-acid chain; its full sequence is Elongation factor G 2 (678 aa).

The 275-residue stretch at 4–278 (QKLRNIGIIA…AVVDYLPSPQ (275 aa)) folds into the tr-type G domain. Residues 13–20 (AHVDAGKT), 77–81 (DTPGH), and 131–134 (NKMD) each bind GTP.

It belongs to the TRAFAC class translation factor GTPase superfamily. Classic translation factor GTPase family. EF-G/EF-2 subfamily.

The protein localises to the cytoplasm. Its function is as follows. Catalyzes the GTP-dependent ribosomal translocation step during translation elongation. During this step, the ribosome changes from the pre-translocational (PRE) to the post-translocational (POST) state as the newly formed A-site-bound peptidyl-tRNA and P-site-bound deacylated tRNA move to the P and E sites, respectively. Catalyzes the coordinated movement of the two tRNA molecules, the mRNA and conformational changes in the ribosome. The polypeptide is Elongation factor G 2 (Hahella chejuensis (strain KCTC 2396)).